The chain runs to 84 residues: uncharacterized protein (84 aa).

This is an uncharacterized protein from Orgyia pseudotsugata (Douglas-fir tussock moth).